The sequence spans 358 residues: MYDRLQAVEDRYDELNELLSDPDVVSDPKRLRDLSKEQSGITATVETYREYKNVNEQIDETRELLGEKLDDEMREMAKEEFAELQKEKAELEERLKLLLVPKDPNDDKNVILEIRGAAGGDEAALFAGDLFRMYSKYAESRGWKVEIMDANPTGIGGYKEIIAMMNGNDAFSRMKYENGAHRVQRVPETESGGRIHTSTATVAILPEAEEVEIELHDKDIRTDTFASTGAGGQSVNTTMSAVRLTHIPTGIVVSMQDERSQLKNKDKAMKVLRARVYDKFEREAREEYDANRKSAVGTGDRSERIRTYNYPQNRVTDHRIGLTIQKLDQIMEGKLDEIIDALILEDQTSKLEHLNDAN.

The residue at position 233 (Gln-233) is an N5-methylglutamine.

Belongs to the prokaryotic/mitochondrial release factor family. In terms of processing, methylated by PrmC. Methylation increases the termination efficiency of RF1.

The protein localises to the cytoplasm. Its function is as follows. Peptide chain release factor 1 directs the termination of translation in response to the peptide chain termination codons UAG and UAA. The protein is Peptide chain release factor 1 of Listeria innocua serovar 6a (strain ATCC BAA-680 / CLIP 11262).